Consider the following 343-residue polypeptide: Anthranilate phosphoribosyltransferase (343 aa).

5-phospho-alpha-D-ribose 1-diphosphate-binding positions include glycine 84, 87–88 (GD), threonine 92, 94–97 (NIST), 112–120 (KHGNRGVSS), and serine 124. Position 84 (glycine 84) interacts with anthranilate. A Mg(2+)-binding site is contributed by serine 96. Residue asparagine 115 participates in anthranilate binding. Arginine 170 provides a ligand contact to anthranilate. The Mg(2+) site is built by aspartate 229 and glutamate 230.

The protein belongs to the anthranilate phosphoribosyltransferase family. Homodimer. Requires Mg(2+) as cofactor.

The catalysed reaction is N-(5-phospho-beta-D-ribosyl)anthranilate + diphosphate = 5-phospho-alpha-D-ribose 1-diphosphate + anthranilate. It functions in the pathway amino-acid biosynthesis; L-tryptophan biosynthesis; L-tryptophan from chorismate: step 2/5. Functionally, catalyzes the transfer of the phosphoribosyl group of 5-phosphorylribose-1-pyrophosphate (PRPP) to anthranilate to yield N-(5'-phosphoribosyl)-anthranilate (PRA). The polypeptide is Anthranilate phosphoribosyltransferase (Burkholderia ambifaria (strain MC40-6)).